We begin with the raw amino-acid sequence, 225 residues long: Tryptophan synthase beta chain (225 aa).

This sequence belongs to the TrpB family. In terms of assembly, tetramer of two alpha and two beta chains. Requires pyridoxal 5'-phosphate as cofactor.

It catalyses the reaction (1S,2R)-1-C-(indol-3-yl)glycerol 3-phosphate + L-serine = D-glyceraldehyde 3-phosphate + L-tryptophan + H2O. Its pathway is amino-acid biosynthesis; L-tryptophan biosynthesis; L-tryptophan from chorismate: step 5/5. In terms of biological role, the beta subunit is responsible for the synthesis of L-tryptophan from indole and L-serine. This is Tryptophan synthase beta chain (trpB) from Buchnera aphidicola subsp. Rhopalosiphum maidis.